The primary structure comprises 398 residues: Na(+)/H(+) antiporter NhaA (398 aa).

12 consecutive transmembrane segments (helical) span residues 21 to 41 (AGGI…NSPL), 56 to 76 (LSVS…LVGL), 94 to 114 (VLPG…YVFI), 124 to 144 (GWAI…SLLG), 153 to 173 (VFLT…IAIF), 176 to 196 (SGLS…LVVL), 201 to 221 (VMTL…VLKS), 263 to 283 (IVPF…SLAG), 284 to 304 (LSLG…LVVG), 306 to 326 (LVGV…DLPA), 333 to 353 (MIGI…IGLL), and 367 to 387 (VGIL…LLMA).

Belongs to the NhaA Na(+)/H(+) (TC 2.A.33) antiporter family.

Its subcellular location is the cell inner membrane. The catalysed reaction is Na(+)(in) + 2 H(+)(out) = Na(+)(out) + 2 H(+)(in). Na(+)/H(+) antiporter that extrudes sodium in exchange for external protons. The protein is Na(+)/H(+) antiporter NhaA of Mesorhizobium japonicum (strain LMG 29417 / CECT 9101 / MAFF 303099) (Mesorhizobium loti (strain MAFF 303099)).